The primary structure comprises 518 residues: GMP synthase [glutamine-hydrolyzing] (518 aa).

The Glutamine amidotransferase type-1 domain maps to 11-203; the sequence is KIIVLDFGSQ…AFDVCQARSN (193 aa). The active-site Nucleophile is the Cys88. Residues His177 and Glu179 contribute to the active site. Positions 204–393 constitute a GMPS ATP-PPase domain; sequence WSMDDFIDMQ…LGMPHELVWR (190 aa). 231–237 is an ATP binding site; it reads SGGVDSS.

As to quaternary structure, homodimer.

It carries out the reaction XMP + L-glutamine + ATP + H2O = GMP + L-glutamate + AMP + diphosphate + 2 H(+). It participates in purine metabolism; GMP biosynthesis; GMP from XMP (L-Gln route): step 1/1. In terms of biological role, catalyzes the synthesis of GMP from XMP. This chain is GMP synthase [glutamine-hydrolyzing], found in Ligilactobacillus salivarius (strain UCC118) (Lactobacillus salivarius).